The primary structure comprises 239 residues: Phosducin-like protein 3 (239 aa).

A disordered region spans residues Lys16–Leu37. Residues Glu28–Ala201 enclose the Phosducin domain. Phosphoserine is present on Ser41. The interval Phe89–Asp239 is thioredoxin fold. Residues Gln217 to Asn227 show a composition bias toward polar residues. The interval Gln217 to Asp239 is disordered.

Belongs to the phosducin family. Interacts (via thioredoxin fold region) with kdr/vegfr2 (via juxtamembrane domain). As to expression, expressed in endothelial cells.

It is found in the cytoplasm. The protein localises to the perinuclear region. It localises to the endoplasmic reticulum. Its function is as follows. Acts as a chaperone for the angiogenic VEGF receptor KDR/VEGFR2, increasing its abundance by inhibiting its ubiquitination and degradation. Inhibits the folding activity of the chaperonin-containing T-complex (CCT) which leads to inhibition of cytoskeletal actin folding. Acts as a chaperone during heat shock alongside HSP90 and HSP40/70 chaperone complexes. Modulates the activation of caspases during apoptosis. This chain is Phosducin-like protein 3, found in Danio rerio (Zebrafish).